A 959-amino-acid polypeptide reads, in one-letter code: Glycine dehydrogenase (decarboxylating) (959 aa).

K707 carries the post-translational modification N6-(pyridoxal phosphate)lysine.

The protein belongs to the GcvP family. As to quaternary structure, the glycine cleavage system is composed of four proteins: P, T, L and H. It depends on pyridoxal 5'-phosphate as a cofactor.

It carries out the reaction N(6)-[(R)-lipoyl]-L-lysyl-[glycine-cleavage complex H protein] + glycine + H(+) = N(6)-[(R)-S(8)-aminomethyldihydrolipoyl]-L-lysyl-[glycine-cleavage complex H protein] + CO2. The glycine cleavage system catalyzes the degradation of glycine. The P protein binds the alpha-amino group of glycine through its pyridoxal phosphate cofactor; CO(2) is released and the remaining methylamine moiety is then transferred to the lipoamide cofactor of the H protein. The sequence is that of Glycine dehydrogenase (decarboxylating) from Photobacterium profundum (strain SS9).